Here is a 747-residue protein sequence, read N- to C-terminus: Protein TraI (747 aa).

2 disordered regions span residues 510–594 (LNKE…PQSQ) and 624–652 (VEQQGTQPDHALRRGISRPGTGVGQTPPG). Basic and acidic residues predominate over residues 513 to 526 (ENTHERTERPEHRG). Residues 537-562 (QRPAADQHATGAAAVARAGDGRPAAG) show a composition bias toward low complexity.

In terms of biological role, the initiation process of transfer DNA synthesis requires the interaction of at least three plasmid-specific components (TraH, TraI, and TraJ) at the transfer origin resulting in the assembly of a specialized nucleoprotein complex - the relaxosome. Site and strand specific cleavage at the transfer origin is dependent on TraI and TraJ. In Escherichia coli, this protein is Protein TraI (traI).